The sequence spans 311 residues: Cytochrome c biogenesis protein CcsA (311 aa).

8 consecutive transmembrane segments (helical) span residues 11-31 (VLLL…LAFW), 44-64 (VVQL…LWRW), 68-88 (GHFP…GCTF), 101-121 (LVPA…SFAL), 146-166 (VIMM…AVLF), 217-237 (TITV…VWAN), 251-268 (TWAL…HTRL), and 280-300 (VAVS…LLGI).

This sequence belongs to the CcmF/CycK/Ccl1/NrfE/CcsA family. May interact with ccs1.

It localises to the cellular thylakoid membrane. In terms of biological role, required during biogenesis of c-type cytochromes (cytochrome c6 and cytochrome f) at the step of heme attachment. In Synechococcus sp. (strain RCC307), this protein is Cytochrome c biogenesis protein CcsA.